We begin with the raw amino-acid sequence, 211 residues long: Dual specificity phosphatase 29 (211 aa).

In terms of domain architecture, Tyrosine-protein phosphatase spans 47–192 (HVNEVWPGIY…LRTLDIQLAI (146 aa)). 136–143 (HCAMGRSR) is a binding site for substrate. The active-site Phosphocysteine intermediate is Cys-137.

It belongs to the protein-tyrosine phosphatase family. Non-receptor class dual specificity subfamily.

The protein localises to the cytoplasm. Its subcellular location is the nucleus. The enzyme catalyses O-phospho-L-tyrosyl-[protein] + H2O = L-tyrosyl-[protein] + phosphate. It carries out the reaction O-phospho-L-seryl-[protein] + H2O = L-seryl-[protein] + phosphate. It catalyses the reaction O-phospho-L-threonyl-[protein] + H2O = L-threonyl-[protein] + phosphate. Its function is as follows. Dual specificity phosphatase able to dephosphorylate phosphotyrosine, phosphoserine and phosphothreonine residues within the same substrate, with a preference for phosphotyrosine as a substrate. Involved in the modulation of AMPK and MAPK1/2 signaling pathways. This chain is Dual specificity phosphatase 29 (dusp29), found in Callorhinchus milii (Ghost shark).